The sequence spans 313 residues: MPIRIPDQLPAADVLRTENIFVMSETRAASQEIRPLRVLILNLMPKKIETETQFLRLLSNSPLQVNVELLRIDDRPSKNTPTEHLDNFYRQFEMVKNRNFDGLIITGAPLGLVQFEDVIYWDHLKTIMEWAKSHVTSTLYVCWAAQAGLKLLYDLPKKTRKEKLSGVYHHRIHKPYHPVLRGFDDSFLAPHSRYADFSPEYLAEHTDLDILATSDDAGVYLATTKDKRNVFVTGHPEYDPHTLHNEYIRDLGEGMEPAIPVNYYPNDNPDNPPIASWRSHGHLLFSNWLNYCVYQQTPYDLDHFSEEAFTKDE.

Cysteine 142 functions as the Acyl-thioester intermediate in the catalytic mechanism. 2 residues coordinate substrate: lysine 163 and serine 192. Residue histidine 235 is the Proton acceptor of the active site. Glutamate 237 is an active-site residue. A substrate-binding site is contributed by arginine 249.

It belongs to the MetA family.

The protein localises to the cytoplasm. It catalyses the reaction L-homoserine + succinyl-CoA = O-succinyl-L-homoserine + CoA. It functions in the pathway amino-acid biosynthesis; L-methionine biosynthesis via de novo pathway; O-succinyl-L-homoserine from L-homoserine: step 1/1. In terms of biological role, transfers a succinyl group from succinyl-CoA to L-homoserine, forming succinyl-L-homoserine. This chain is Homoserine O-succinyltransferase, found in Vibrio vulnificus (strain CMCP6).